A 462-amino-acid chain; its full sequence is Chromosomal replication initiator protein DnaA (462 aa).

The segment at 1 to 83 is domain I, interacts with DnaA modulators; sequence MSLSLWQQCL…LRFEVGSKPA (83 aa). The interval 83-125 is domain II; that stretch reads AVRAHSHPVTASVSAPVAPVTRSAPVRPSWDSSPAQPELSYRS. The interval 105–127 is disordered; sequence SAPVRPSWDSSPAQPELSYRSNV. A compositionally biased stretch (polar residues) spans 112–127; sequence WDSSPAQPELSYRSNV. Residues 126–342 form a domain III, AAA+ region region; the sequence is NVNPKHTFDN…GALNRVIANA (217 aa). Positions 170, 172, 173, and 174 each coordinate ATP. The tract at residues 343–462 is domain IV, binds dsDNA; it reads NFTGRAITID…FSNLIRTLSS (120 aa).

The protein belongs to the DnaA family. As to quaternary structure, oligomerizes as a right-handed, spiral filament on DNA at oriC.

The protein localises to the cytoplasm. In terms of biological role, plays an essential role in the initiation and regulation of chromosomal replication. ATP-DnaA binds to the origin of replication (oriC) to initiate formation of the DNA replication initiation complex once per cell cycle. Binds the DnaA box (a 9 base pair repeat at the origin) and separates the double-stranded (ds)DNA. Forms a right-handed helical filament on oriC DNA; dsDNA binds to the exterior of the filament while single-stranded (ss)DNA is stabiized in the filament's interior. The ATP-DnaA-oriC complex binds and stabilizes one strand of the AT-rich DNA unwinding element (DUE), permitting loading of DNA polymerase. After initiation quickly degrades to an ADP-DnaA complex that is not apt for DNA replication. Binds acidic phospholipids. This Yersinia enterocolitica serotype O:8 / biotype 1B (strain NCTC 13174 / 8081) protein is Chromosomal replication initiator protein DnaA.